A 122-amino-acid polypeptide reads, in one-letter code: NADH-quinone oxidoreductase subunit A (122 aa).

The next 3 helical transmembrane spans lie at 10 to 30 (MIVL…LTLG), 66 to 86 (IFAL…PWAV), and 91 to 111 (LGLF…VGLA).

It belongs to the complex I subunit 3 family. NDH-1 is composed of 14 different subunits. Subunits NuoA, H, J, K, L, M, N constitute the membrane sector of the complex.

The protein localises to the cell membrane. The catalysed reaction is a quinone + NADH + 5 H(+)(in) = a quinol + NAD(+) + 4 H(+)(out). NDH-1 shuttles electrons from NADH, via FMN and iron-sulfur (Fe-S) centers, to quinones in the respiratory chain. The immediate electron acceptor for the enzyme in this species is believed to be a menaquinone. Couples the redox reaction to proton translocation (for every two electrons transferred, four hydrogen ions are translocated across the cytoplasmic membrane), and thus conserves the redox energy in a proton gradient. This is NADH-quinone oxidoreductase subunit A from Bacillus mycoides (strain KBAB4) (Bacillus weihenstephanensis).